The following is a 541-amino-acid chain: Probable inorganic phosphate transporter 1-8 (541 aa).

At 1 to 28 (MARQEQQQHLQVLSALDAAKTQWYHFTA) the chain is on the cytoplasmic side. A helical membrane pass occupies residues 29-49 (IVVAGMGFFTDAYDLFCISLV). Over 50 to 74 (TKLLGRIYYTDLAKENPGSLPPNVA) the chain is Extracellular. Residues 75 to 95 (AAVNGVAFCGTLAGQLFFGWL) form a helical membrane-spanning segment. The Cytoplasmic segment spans residues 96-102 (GDKLGRK). Residues 103 to 123 (SVYGMTLLMMVICSIASGLSF) traverse the membrane as a helical segment. Residues 124 to 126 (SHT) lie on the Extracellular side of the membrane. The helical transmembrane segment at 127–147 (PTSVMATLCFFRFWLGFGIGG) threads the bilayer. Over 148–168 (DYPLSATIMSEYANKKTRGAF) the chain is Cytoplasmic. Residues 169–189 (IAAVFAMQGFGILAGGIVTLI) form a helical membrane-spanning segment. The Extracellular segment spans residues 190–215 (ISSAFRAGFPAPAYQDDRAGSTVRQA). A helical membrane pass occupies residues 216–236 (DYVWRIILMLGAMPALLTYYW). Residues 237–297 (RMKMPETARY…GLFSRQFARR (61 aa)) lie on the Cytoplasmic side of the membrane. The chain crosses the membrane as a helical span at residues 298-318 (HGLHLVGTATTWFLLDIAFYS). Over 319-353 (QNLFQKDIFTSINWIPKAKTMSALEEVFRIARAQT) the chain is Extracellular. A helical transmembrane segment spans residues 354 to 374 (LIALCGTVPGYWFTVFLIDIV). Residues 375–376 (GR) are Cytoplasmic-facing. The chain crosses the membrane as a helical span at residues 377–397 (FAIQLLGFFMMTVFMLGLAVP). Residues 398–404 (YHHWTTK) lie on the Extracellular side of the membrane. A helical membrane pass occupies residues 405 to 425 (GNHIGFVVMYAFTFFFANFGP). Topologically, residues 426 to 447 (NSTTFIVPAEIFPARLRSTCHG) are cytoplasmic. Residues 448-468 (ISAAAGKAGAIIGSFGFLYAA) form a helical membrane-spanning segment. The Extracellular segment spans residues 469 to 486 (QDPHKPDAGYKPGIGVRN). The helical transmembrane segment at 487–507 (SLFVLAGCNLLGFICTFLVPE) threads the bilayer. The Cytoplasmic segment spans residues 508–541 (SKGKSLEEMSGEAEDDDDEVAAAGGGAAVRPQTA). The segment at 514-541 (EEMSGEAEDDDDEVAAAGGGAAVRPQTA) is disordered. Over residues 516-527 (MSGEAEDDDDEV) the composition is skewed to acidic residues.

Belongs to the major facilitator superfamily. Phosphate:H(+) symporter (TC 2.A.1.9) family.

The protein resides in the membrane. Its function is as follows. High-affinity transporter for external inorganic phosphate. The protein is Probable inorganic phosphate transporter 1-8 (PHT1-8) of Oryza sativa subsp. japonica (Rice).